The following is a 213-amino-acid chain: Large ribosomal subunit protein uL1 (213 aa).

It belongs to the universal ribosomal protein uL1 family. Part of the 50S ribosomal subunit.

In terms of biological role, binds directly to 23S rRNA. Probably involved in E site tRNA release. Functionally, protein L1 is also a translational repressor protein, it controls the translation of its operon by binding to its mRNA. The protein is Large ribosomal subunit protein uL1 of Methanosarcina barkeri (strain Fusaro / DSM 804).